A 486-amino-acid chain; its full sequence is Amyloid-beta A4 precursor protein-binding family B member 3 (486 aa).

One can recognise a WW domain in the interval 29 to 61; it reads TGLPPGWRKIRDAAGTYYWHVPSGSTQWQRPTW. PID domains are found at residues 113 to 280 and 285 to 440; these read EPGA…QVEL and SQAA…RTSS. The interval 438–460 is disordered; it reads TSSMDSPGGPLPPPLLKGGAGGA.

In terms of assembly, interacts with APP (via intracellular domain). Interacts with APLP1 and APLP2 (via intracellular domain).

It is found in the cytoplasm. The protein localises to the nucleus. In terms of biological role, may modulate the internalization of amyloid-beta precursor protein. The sequence is that of Amyloid-beta A4 precursor protein-binding family B member 3 from Mus musculus (Mouse).